Reading from the N-terminus, the 318-residue chain is Apo-salmochelin esterase (318 aa).

The helical transmembrane segment at 13 to 32 (KAIFFHLSCLTLICSAQVYA) threads the bilayer. Residues Ser189 and His287 contribute to the active site.

The protein belongs to the esterase D family. Monomer.

It is found in the cell inner membrane. The enzyme catalyses enterobactin + H2O = N-(2,3-dihydroxybenzoyl)-L-serine trimer. The catalysed reaction is monoglucosyl-enterobactin + H2O = [N-(2,3-dihydroxybenzoyl)-L-seryl]2-N-(C-5-[deoxy-beta-D-glucosyl]-2,3-dihydroxybenzoyl)-L-serine + H(+). It carries out the reaction diglucosyl-enterobactin + H2O = N-(2,3-dihydroxybenzoyl)-L-seryl-[N-(C-5-[deoxy-beta-D-glucosyl]-2,3-dihydroxybenzoyl)-L-serine]2 + H(+). It catalyses the reaction triglucosyl-enterobactin + H2O = [N-(C-5-[deoxy-beta-D-glucosyl]-2,3-dihydroxybenzoyl)-L-serine]3 + H(+). Catalyzes the hydrolysis of both the apo and Fe3(+)-bound forms of enterobactin (Ent), monoglucosyl-C-Ent (MGE), diglucosyl-C-Ent (DGE) and triglucosyl-C-Ent (TGE). It prefers apo siderophores as substrates and hydrolyzes the Fe3(+)-bound siderophores very inefficiently. Tends to hydrolyze the trilactone just once to produce linearized trimers. May hydrolyze and linearize some or all of apo enterobactins while they are being exported. The protein is Apo-salmochelin esterase of Escherichia coli O6:H1 (strain CFT073 / ATCC 700928 / UPEC).